The following is a 432-amino-acid chain: Phosphomethylpyrimidine synthase (432 aa).

Substrate-binding positions include N66, M95, Y124, H163, 185-187, 226-229, and E265; these read SRG and DGLR. Zn(2+) is bound at residue H269. Y292 contacts substrate. H333 is a Zn(2+) binding site. [4Fe-4S] cluster contacts are provided by C409, C412, and C416.

The protein belongs to the ThiC family. Requires [4Fe-4S] cluster as cofactor.

The enzyme catalyses 5-amino-1-(5-phospho-beta-D-ribosyl)imidazole + S-adenosyl-L-methionine = 4-amino-2-methyl-5-(phosphooxymethyl)pyrimidine + CO + 5'-deoxyadenosine + formate + L-methionine + 3 H(+). It participates in cofactor biosynthesis; thiamine diphosphate biosynthesis. In terms of biological role, catalyzes the synthesis of the hydroxymethylpyrimidine phosphate (HMP-P) moiety of thiamine from aminoimidazole ribotide (AIR) in a radical S-adenosyl-L-methionine (SAM)-dependent reaction. The polypeptide is Phosphomethylpyrimidine synthase (Thermoanaerobacter pseudethanolicus (strain ATCC 33223 / 39E) (Clostridium thermohydrosulfuricum)).